A 218-amino-acid chain; its full sequence is Small ribosomal subunit protein uS3c (218 aa).

The KH type-2 domain maps to Val47 to Ala118.

This sequence belongs to the universal ribosomal protein uS3 family. Part of the 30S ribosomal subunit.

It is found in the plastid. The protein localises to the chloroplast. In Solanum lycopersicum (Tomato), this protein is Small ribosomal subunit protein uS3c (rps3).